The primary structure comprises 239 residues: Ankyrin repeat domain-containing protein 49 (239 aa).

S49 carries the phosphoserine modification. 4 ANK repeats span residues 73–103 (DPSR…HVNT), 107–136 (DEYT…DVHA), 140–169 (DGWT…DINA), and 173–206 (GLLT…GLKN).

As to expression, widely expressed in fetus, at a high level in fetal liver, brain and lung.

It is found in the nucleus. In terms of biological role, induces HBG1 expression. May have a role in spermatogenesis where it promotes autophagy in response to serum starvation, via the NF-kappaB pathway. This chain is Ankyrin repeat domain-containing protein 49 (ANKRD49), found in Homo sapiens (Human).